Reading from the N-terminus, the 310-residue chain is MQQNPHTHAAPGAARPVLRGVRRRLAAVTAAVAAVLVLGTLTGPGAQAADNPYERGPAPTESSIEALRGPYSVADTSVSSLAVTGFGGGTIYYPTSTSDGTFGAVVIAPGFTAYQSSIAWLGPRLASQGFVVFTIDTNTTLDQPDSRGRQLLAALDYLTGRSSVRGRIDSGRLGVMGHSMGGGGTLEAAKSRPSLQAAIPLTPWNLDKSWPEVSTPTLVVGADGDTIAPVASHAEPFYSGLPSSTDRAYLELNNATHFSPNTSNTTIAKYSISWLKRFIDDDTRYEQFLCPLPRPSLTIEEYRGNCPHGS.

The segment at residues 1-48 (MQQNPHTHAAPGAARPVLRGVRRRLAAVTAAVAAVLVLGTLTGPGAQA) is a signal peptide (tat-type signal). Bis(2-hydroxyethyl) terephthalate is bound at residue Phe111. Ser179 acts as the Nucleophile in catalysis. Bis(2-hydroxyethyl) terephthalate contacts are provided by Met180 and Trp204. Active-site charge relay system residues include Asp225 and His257. A disulfide bond links Cys290 and Cys306.

Belongs to the AB hydrolase superfamily. Predicted to be exported by the Tat system. The position of the signal peptide cleavage has not been experimentally proven.

Its subcellular location is the secreted. The enzyme catalyses bis(2-hydroxyethyl) terephthalate + H2O = 4-[(2-hydroxyethoxy)carbonyl]benzoate + ethylene glycol + H(+). Catalyzes the degradation of bis(hydroxyethyl) terephthalate (BHET), a derived-oligomer of the plastic poly(ethylene terephthalate) (PET), hydrolyzing BHET to mono(2-hydroxyethyl) terephthalate (MHET). Shows no activity against PET. In Streptomyces coelicolor (strain ATCC BAA-471 / A3(2) / M145), this protein is Bis(hydroxyethyl) terephthalate hydrolase.